Here is a 616-residue protein sequence, read N- to C-terminus: Zinc metalloproteinase-disintegrin-like ecarin (616 aa).

An N-terminal signal peptide occupies residues 1 to 20; the sequence is MIQILLVIICLAVFPYQGCS. A propeptide spanning residues 21–190 is cleaved from the precursor; that stretch reads IILGSGNVND…EPIKKTLGLI (170 aa). The Peptidase M12B domain maps to 201-397; it reads KFIELVVVVD…YNPKCILDPP (197 aa). Glu-204 lines the Ca(2+) pocket. 2 N-linked (GlcNAc...) asparagine glycosylation sites follow: Asn-219 and Asn-261. Position 288 (Asp-288) interacts with Ca(2+). Asn-295 and Asn-326 each carry an N-linked (GlcNAc...) asparagine glycan. Disulfide bonds link Cys-312–Cys-392, Cys-352–Cys-376, and Cys-354–Cys-359. His-337 lines the Zn(2+) pocket. The active site involves Glu-338. His-341 and His-347 together coordinate Zn(2+). Cys-392, Val-407, Asn-410, Ile-412, Glu-414, Glu-417, and Asp-420 together coordinate Ca(2+). The 87-residue stretch at 405–491 folds into the Disintegrin domain; it reads PAVCGNEIWE…ECPRNEFQRN (87 aa). Cystine bridges form between Cys-408/Cys-437, Cys-419/Cys-432, Cys-421/Cys-427, Cys-431/Cys-454, Cys-445/Cys-451, Cys-450/Cys-476, Cys-463/Cys-483, Cys-470/Cys-502, Cys-495/Cys-507, Cys-514/Cys-567, Cys-529/Cys-578, Cys-542/Cys-555, Cys-562/Cys-604, and Cys-598/Cys-609. Positions 469-471 match the D/ECD-tripeptide motif; it reads DCD. The Ca(2+) site is built by Asp-471, Val-472, and Asn-486. Asn-497 is a glycosylation site (N-linked (GlcNAc...) asparagine).

The protein belongs to the venom metalloproteinase (M12B) family. P-III subfamily. P-IIIa sub-subfamily. In terms of assembly, monomer. The cofactor is Zn(2+). In terms of tissue distribution, expressed by the venom gland.

It is found in the secreted. Its function is as follows. Snake venom zinc metalloproteinase that catalyzes the conversion of prothrombin (F2) to alpha-thrombin through formation of a thrombin intermediate, thereby functioning as a procoagulant protein. Has a low Km for prothrombin and a high kcat. Cleaves the 320-Arg-Ile-321 bond in prothrombin and produces meizothrombin which is ultimately converted to alpha-thrombin by autolysis. This chain is Zinc metalloproteinase-disintegrin-like ecarin, found in Echis carinatus (Saw-scaled viper).